The sequence spans 110 residues: UPF0367 protein sync_2587 (110 aa).

It belongs to the UPF0367 family.

The chain is UPF0367 protein sync_2587 from Synechococcus sp. (strain CC9311).